A 276-amino-acid polypeptide reads, in one-letter code: Large ribosomal subunit protein uL2 (276 aa).

The disordered stretch occupies residues 219–268; it reads TVRGSVMNPNDHPHGGGEGRQPVGRKSPMTPWGKPALGLKTRNKKAKSSK.

This sequence belongs to the universal ribosomal protein uL2 family. As to quaternary structure, part of the 50S ribosomal subunit. Forms a bridge to the 30S subunit in the 70S ribosome.

One of the primary rRNA binding proteins. Required for association of the 30S and 50S subunits to form the 70S ribosome, for tRNA binding and peptide bond formation. It has been suggested to have peptidyltransferase activity; this is somewhat controversial. Makes several contacts with the 16S rRNA in the 70S ribosome. The sequence is that of Large ribosomal subunit protein uL2 from Lactococcus lactis subsp. lactis (strain IL1403) (Streptococcus lactis).